The following is a 354-amino-acid chain: LAS seventeen-binding protein 5 (354 aa).

A VHS domain is found at 15-161; sequence TIFRIVSSRD…LGQTVKQRYS (147 aa). Disordered regions lie at residues 160–184 and 296–354; these read YSKS…DDSA and SAQD…HNKI. Residues 296–310 show a composition bias toward basic and acidic residues; the sequence is SAQDDSSDESDHGSY.

It belongs to the LSB5 family. As to quaternary structure, interacts with SLA1 and LAS17.

The protein localises to the cytoplasm. It localises to the cell cortex. Its subcellular location is the cytoskeleton. Functionally, essential for the organization of the actin cytoskeleton, fluid phase endocytosis and vesicle trafficking, together with YSC84. The protein is LAS seventeen-binding protein 5 (LSB5) of Saccharomyces cerevisiae (strain ATCC 204508 / S288c) (Baker's yeast).